We begin with the raw amino-acid sequence, 302 residues long: Potassium/proton antiporter CemA (302 aa).

4 consecutive transmembrane segments (helical) span residues 55 to 75 (VFVS…ITFL), 187 to 207 (FVSF…IIIL), 225 to 247 (FLLI…ELFL), and 262 to 282 (FIFL…KYWI).

Belongs to the CemA family.

It localises to the plastid. It is found in the chloroplast inner membrane. It catalyses the reaction K(+)(in) + H(+)(out) = K(+)(out) + H(+)(in). Functionally, contributes to K(+)/H(+) antiport activity by supporting proton efflux to control proton extrusion and homeostasis in chloroplasts in a light-dependent manner to modulate photosynthesis. Prevents excessive induction of non-photochemical quenching (NPQ) under continuous-light conditions. Indirectly promotes efficient inorganic carbon uptake into chloroplasts. The polypeptide is Potassium/proton antiporter CemA (Tupiella akineta (Green alga)).